The primary structure comprises 528 residues: Carboxysome shell carbonic anhydrase (528 aa).

Positions 17 to 47 are disordered; the sequence is PIAPNPRWQKENPTAHGSTDTGGFGYNGGNE. C184 serves as a coordination point for Zn(2+). The active-site Proton acceptor is D186. 2 residues coordinate Zn(2+): H252 and C263.

The protein belongs to the beta-class carbonic anhydrase family. CsoSCA subfamily. Homodimer. The cofactor is Zn(2+).

The protein resides in the carboxysome. The catalysed reaction is hydrogencarbonate + H(+) = CO2 + H2O. Its activity is regulated as follows. Inhibited by ethoxyzolamide and dithiothreitol (in crude extracts upon expression in E.coli). Reversible hydration of carbon dioxide. This bacteria encodes at least 3 CA enzymes. Essential for chemolithotrophic carbon dioxide fixation, supplies CO(2) to RuBisCO (ribulose bisphosphate carboxylase, cbbL-cbbS) in the carboxysome. In Hydrogenovibrio crunogenus (strain DSM 25203 / XCL-2) (Thiomicrospira crunogena), this protein is Carboxysome shell carbonic anhydrase.